A 156-amino-acid chain; its full sequence is ATP synthase subunit b (156 aa).

The chain crosses the membrane as a helical span at residues 12–32 (IAFAIFVWFCVKYVWPPITAA).

Belongs to the ATPase B chain family. F-type ATPases have 2 components, F(1) - the catalytic core - and F(0) - the membrane proton channel. F(1) has five subunits: alpha(3), beta(3), gamma(1), delta(1), epsilon(1). F(0) has three main subunits: a(1), b(2) and c(10-14). The alpha and beta chains form an alternating ring which encloses part of the gamma chain. F(1) is attached to F(0) by a central stalk formed by the gamma and epsilon chains, while a peripheral stalk is formed by the delta and b chains.

Its subcellular location is the cell inner membrane. Its function is as follows. F(1)F(0) ATP synthase produces ATP from ADP in the presence of a proton or sodium gradient. F-type ATPases consist of two structural domains, F(1) containing the extramembraneous catalytic core and F(0) containing the membrane proton channel, linked together by a central stalk and a peripheral stalk. During catalysis, ATP synthesis in the catalytic domain of F(1) is coupled via a rotary mechanism of the central stalk subunits to proton translocation. Functionally, component of the F(0) channel, it forms part of the peripheral stalk, linking F(1) to F(0). In Marinobacter nauticus (strain ATCC 700491 / DSM 11845 / VT8) (Marinobacter aquaeolei), this protein is ATP synthase subunit b.